Consider the following 248-residue polypeptide: Meiotic drive suppressor wtf1 (248 aa).

A disordered region spans residues Leu-30 to Asp-68. The next 4 helical transmembrane spans lie at Phe-73–Cys-93, Trp-110–Phe-130, Ile-152–Thr-172, and Ser-186–Val-206.

Belongs to the WTF family. In terms of assembly, homomer. Interacts with other proteins that exhibit high sequence similarity.

It localises to the spore membrane. It is found in the vacuole membrane. In terms of biological role, acts as a suppressor component of the dual wtf meiotic drive system, and can suppress but not confer meiotic drive by compatible poisons. Wtf meiotic drive systems promote unequal transmission of alleles from the parental zygote to progeny spores by encoding a poison and an antidote from the same locus; the poison is trans-acting and forms toxic aggregates in all spores within an ascus, wherease the antidote is spore-specific and targets aggregates for degradation by the vacuole. Meiotic drive by wtf systems therefore lead to poisoning of all progeny that do not inherit the dual poison/antidote allele, or express a compatible antidote. The protein is Meiotic drive suppressor wtf1 of Schizosaccharomyces pombe (Fission yeast).